The primary structure comprises 298 residues: Beta-soluble NSF attachment protein (298 aa).

It belongs to the SNAP family. As to quaternary structure, interacts with PRKCABP, and disrupts the interaction between GRIA2 and PRKCABP, leading to the internalization of GRIA2. Brain.

The protein resides in the membrane. Its function is as follows. Required for vesicular transport between the endoplasmic reticulum and the Golgi apparatus. This Bos taurus (Bovine) protein is Beta-soluble NSF attachment protein (NAPB).